Consider the following 99-residue polypeptide: Seminal vesicle secretory protein 6 (99 aa).

A signal peptide spans 1 to 21 (MSPTSFFLLTMLLVLVTETAA).

It belongs to the SVP2/SVP5/SVP6 family. As to expression, testis.

It localises to the secreted. The protein resides in the extracellular space. The chain is Seminal vesicle secretory protein 6 (Svs6) from Mus musculus (Mouse).